The chain runs to 140 residues: Ribosome maturation factor RimP (140 aa).

Belongs to the RimP family.

It is found in the cytoplasm. Functionally, required for maturation of 30S ribosomal subunits. This chain is Ribosome maturation factor RimP, found in Campylobacter jejuni subsp. doylei (strain ATCC BAA-1458 / RM4099 / 269.97).